Consider the following 127-residue polypeptide: MFSTLLAVFIGGGVGSVARWQLGVKFNNLYPTLPLGTLLANLIGAFVIGGALAFFLRHPHLDQDWKILITTGLCGGLTTFSTFSAEVIMFLQSGQLAAAGLHVLLNLAGSLLMTALAFALVTWVTTH.

4 consecutive transmembrane segments (helical) span residues threonine 4–valine 24, leucine 35–phenylalanine 55, threonine 71–leucine 91, and valine 103–tryptophan 123. Residues glycine 75 and threonine 78 each coordinate Na(+).

Belongs to the fluoride channel Fluc/FEX (TC 1.A.43) family.

It localises to the cell inner membrane. The catalysed reaction is fluoride(in) = fluoride(out). With respect to regulation, na(+) is not transported, but it plays an essential structural role and its presence is essential for fluoride channel function. In terms of biological role, fluoride-specific ion channel. Important for reducing fluoride concentration in the cell, thus reducing its toxicity. This chain is Fluoride-specific ion channel FluC, found in Pectobacterium carotovorum subsp. carotovorum (strain PC1).